Here is a 480-residue protein sequence, read N- to C-terminus: Adenosylhomocysteinase (480 aa).

3 residues coordinate substrate: T63, D142, and E203. 204–206 (TTT) contributes to the NAD(+) binding site. K233 and D237 together coordinate substrate. NAD(+)-binding positions include N238, 267-272 (GYGDVG), E290, N325, 346-348 (IGH), and N394.

This sequence belongs to the adenosylhomocysteinase family. NAD(+) is required as a cofactor.

It localises to the cytoplasm. The catalysed reaction is S-adenosyl-L-homocysteine + H2O = L-homocysteine + adenosine. It functions in the pathway amino-acid biosynthesis; L-homocysteine biosynthesis; L-homocysteine from S-adenosyl-L-homocysteine: step 1/1. Its function is as follows. May play a key role in the regulation of the intracellular concentration of adenosylhomocysteine. This Xylella fastidiosa (strain M12) protein is Adenosylhomocysteinase.